The chain runs to 325 residues: Secreted RxLR effector protein RXLR-C07 (325 aa).

The N-terminal stretch at 1-19 (MQGVRITILWCIVLATIYA) is a signal peptide. 5 TPR repeats span residues 37-75 (RGLR…GEER), 92-125 (AQIL…IEKI), 134-167 (GLSL…VKKG), 218-251 (AELY…FLQR), and 260-293 (AFSL…AVSI). The RxLR-dEER signature appears at 37–75 (RGLRNAGMKANDERMFKDAIEKLRHAISLLHNRVFGEER).

It belongs to the RxLR effector family.

Its subcellular location is the secreted. The protein resides in the host cytoplasm. It localises to the host nucleus. The protein localises to the host nucleolus. Functionally, secreted effector that suppresses pattern-triggered immunity (PTI) in plant host. The protein is Secreted RxLR effector protein RXLR-C07 of Plasmopara halstedii (Downy mildew of sunflower).